The sequence spans 92 residues: Small ribosomal subunit protein uS19 (92 aa).

This sequence belongs to the universal ribosomal protein uS19 family.

Its function is as follows. Protein S19 forms a complex with S13 that binds strongly to the 16S ribosomal RNA. The polypeptide is Small ribosomal subunit protein uS19 (Methylobacterium nodulans (strain LMG 21967 / CNCM I-2342 / ORS 2060)).